Here is a 746-residue protein sequence, read N- to C-terminus: Bud site selection protein 7 (746 aa).

Residues 733–746 (LNFFTTCTIGCYDA) form a CHS5-binding region.

This sequence belongs to the CHAPS family. Component of the CHS5/6 complex composed of the 4 CHAPS proteins BCH1, BCH2v, BUD7, and CHS6 as well as at least CHS5 and GTP-bound ARF1. The complex interacts with the cargo protein CHS3.

The protein resides in the golgi apparatus. Its subcellular location is the trans-Golgi network membrane. Functionally, member of the CHS5-ARF1P-binding proteins (CHAPS) which mediates export of specific cargo proteins, including chitin synthase CHS3. May be involved in positioning the proximal bud pole signal. This chain is Bud site selection protein 7 (BUD7), found in Saccharomyces cerevisiae (strain ATCC 204508 / S288c) (Baker's yeast).